A 476-amino-acid chain; its full sequence is Cytosolic iron-sulfur assembly component 3 (476 aa).

At Ala2 the chain carries N-acetylalanine. Positions 24, 71, 74, 77, 190, and 246 each coordinate [4Fe-4S] cluster. A disordered region spans residues 297 to 316 (DGLTSSVSAEEPSSHRGGGS). Positions 395 and 399 each coordinate [4Fe-4S] cluster.

It belongs to the NARF family. As to quaternary structure, external component of the CIA complex. In the CIA complex, interacts directly with CIAO1 and MMS19.

Its function is as follows. Component of the cytosolic iron-sulfur protein assembly (CIA) complex, a multiprotein complex that mediates the incorporation of iron-sulfur cluster into extramitochondrial Fe/S proteins. Seems to negatively regulate the level of HIF1A expression, although this effect could be indirect. This Mus musculus (Mouse) protein is Cytosolic iron-sulfur assembly component 3 (Ciao3).